Here is a 1049-residue protein sequence, read N- to C-terminus: RTX-III toxin determinant A from serotype 2 (1049 aa).

A run of 3 helical transmembrane segments spans residues Thr-154–Ile-170, Ala-315–Leu-331, and Leu-397–Ile-413. Hemolysin-type calcium-binding repeat units lie at residues Lys-743–Leu-760, Asn-761–Leu-778, Arg-779–Leu-796, Leu-797–Leu-814, Arg-825–Leu-842, and Asp-843–Tyr-860.

It belongs to the RTX prokaryotic toxin (TC 1.C.11) family. In terms of processing, palmitoylated by ApxIIIC. The toxin only becomes active when modified.

The protein resides in the secreted. The protein localises to the host cell membrane. Functionally, does not have hemolytic activity but shows a strong cytotoxicity towards alveolar macrophages and neutrophils. The polypeptide is RTX-III toxin determinant A from serotype 2 (apxIIIA) (Actinobacillus pleuropneumoniae (Haemophilus pleuropneumoniae)).